The primary structure comprises 199 residues: Recombination protein RecR (199 aa).

Residues 57–72 (CAECRTFTEEEVCHIC) form a C4-type zinc finger. One can recognise a Toprim domain in the interval 81 to 176 (GQICVVESPA…EASRIAHGVP (96 aa)).

This sequence belongs to the RecR family.

In terms of biological role, may play a role in DNA repair. It seems to be involved in an RecBC-independent recombinational process of DNA repair. It may act with RecF and RecO. In Vibrio parahaemolyticus serotype O3:K6 (strain RIMD 2210633), this protein is Recombination protein RecR.